Here is a 317-residue protein sequence, read N- to C-terminus: Putative pyridoxal kinase BUD17 (317 aa).

S16 and Y128 together coordinate substrate. ATP is bound by residues 190–191 (TS) and 220–232 (EIPK…SGSG). D233 is a binding site for substrate.

It belongs to the pyridoxine kinase family. The cofactor is a divalent metal cation.

Its subcellular location is the cytoplasm. It localises to the nucleus. The catalysed reaction is pyridoxal + ATP = pyridoxal 5'-phosphate + ADP + H(+). Required for synthesis of pyridoxal-5-phosphate from vitamin B6. Important for bud site selection. This chain is Putative pyridoxal kinase BUD17 (BUD17), found in Saccharomyces cerevisiae (strain ATCC 204508 / S288c) (Baker's yeast).